Here is a 2417-residue protein sequence, read N- to C-terminus: Protein pad-1 (2417 aa).

Disordered regions lie at residues 409 to 437, 449 to 475, 994 to 1029, and 1957 to 2032; these read SSNS…DREG, SNKD…PDEE, TSTG…DDDT, and SMSN…RRDP. Low complexity-rich tracts occupy residues 456-468 and 1002-1024; these read TSVT…NASS and DPSA…VVPA. Residues 1969-1982 are compositionally biased toward polar residues; it reads DNPSGSTRNSTLSL. The span at 2003–2014 shows a compositional bias: basic and acidic residues; sequence SKSENMKIEKKS. Over residues 2015-2025 the composition is skewed to polar residues; that stretch reads SSNLRASIKDT.

The protein belongs to the DOP1 family.

Its function is as follows. May be involved in protein traffic between late Golgi and early endosomes. Essential for cell patterning during gastrulation. The chain is Protein pad-1 (pad-1) from Caenorhabditis elegans.